Reading from the N-terminus, the 203-residue chain is ATP-dependent Clp protease proteolytic subunit (203 aa).

S107 serves as the catalytic Nucleophile. H132 is a catalytic residue.

The protein belongs to the peptidase S14 family. As to quaternary structure, fourteen ClpP subunits assemble into 2 heptameric rings which stack back to back to give a disk-like structure with a central cavity, resembling the structure of eukaryotic proteasomes.

The protein resides in the cytoplasm. The catalysed reaction is Hydrolysis of proteins to small peptides in the presence of ATP and magnesium. alpha-casein is the usual test substrate. In the absence of ATP, only oligopeptides shorter than five residues are hydrolyzed (such as succinyl-Leu-Tyr-|-NHMec, and Leu-Tyr-Leu-|-Tyr-Trp, in which cleavage of the -Tyr-|-Leu- and -Tyr-|-Trp bonds also occurs).. In terms of biological role, cleaves peptides in various proteins in a process that requires ATP hydrolysis. Has a chymotrypsin-like activity. Plays a major role in the degradation of misfolded proteins. This is ATP-dependent Clp protease proteolytic subunit from Shewanella loihica (strain ATCC BAA-1088 / PV-4).